The primary structure comprises 300 residues: Light-independent protochlorophyllide reductase iron-sulfur ATP-binding protein (300 aa).

Residues 10–15 and lysine 39 each bind ATP; that span reads GIGKST. Residue serine 14 coordinates Mg(2+). 2 residues coordinate [4Fe-4S] cluster: cysteine 95 and cysteine 129. Position 180-181 (180-181) interacts with ATP; that stretch reads NR.

This sequence belongs to the NifH/BchL/ChlL family. In terms of assembly, homodimer. Protochlorophyllide reductase is composed of three subunits; ChlL, ChlN and ChlB. [4Fe-4S] cluster serves as cofactor.

Its subcellular location is the plastid. It is found in the chloroplast. The enzyme catalyses chlorophyllide a + oxidized 2[4Fe-4S]-[ferredoxin] + 2 ADP + 2 phosphate = protochlorophyllide a + reduced 2[4Fe-4S]-[ferredoxin] + 2 ATP + 2 H2O. Its pathway is porphyrin-containing compound metabolism; chlorophyll biosynthesis (light-independent). Component of the dark-operative protochlorophyllide reductase (DPOR) that uses Mg-ATP and reduced ferredoxin to reduce ring D of protochlorophyllide (Pchlide) to form chlorophyllide a (Chlide). This reaction is light-independent. The L component serves as a unique electron donor to the NB-component of the complex, and binds Mg-ATP. The chain is Light-independent protochlorophyllide reductase iron-sulfur ATP-binding protein from Auxenochlorella protothecoides (Green microalga).